Here is a 303-residue protein sequence, read N- to C-terminus: Mycothiol acetyltransferase (303 aa).

Asp33 provides a ligand contact to 1D-myo-inositol 2-(L-cysteinylamino)-2-deoxy-alpha-D-glucopyranoside. Acetyl-CoA contacts are provided by residues 78–80 (VVV) and 86–91 (RRGTGS). The N-acetyltransferase domain occupies 150-303 (VRFATYSGPH…AYAAVAPTDV (154 aa)). 1D-myo-inositol 2-(L-cysteinylamino)-2-deoxy-alpha-D-glucopyranoside is bound by residues Glu177, Lys218, and Glu226. 230–232 (VGV) lines the acetyl-CoA pocket. Tyr269 is a 1D-myo-inositol 2-(L-cysteinylamino)-2-deoxy-alpha-D-glucopyranoside binding site. 274 to 279 (NTAAVK) is a binding site for acetyl-CoA.

Belongs to the acetyltransferase family. MshD subfamily. In terms of assembly, monomer.

It carries out the reaction 1D-myo-inositol 2-(L-cysteinylamino)-2-deoxy-alpha-D-glucopyranoside + acetyl-CoA = mycothiol + CoA + H(+). Catalyzes the transfer of acetyl from acetyl-CoA to desacetylmycothiol (Cys-GlcN-Ins) to form mycothiol. The sequence is that of Mycothiol acetyltransferase from Mycolicibacterium gilvum (strain PYR-GCK) (Mycobacterium gilvum (strain PYR-GCK)).